Here is a 100-residue protein sequence, read N- to C-terminus: Small ribosomal subunit protein eS24 (100 aa).

The protein belongs to the eukaryotic ribosomal protein eS24 family.

This chain is Small ribosomal subunit protein eS24, found in Methanothermobacter thermautotrophicus (strain ATCC 29096 / DSM 1053 / JCM 10044 / NBRC 100330 / Delta H) (Methanobacterium thermoautotrophicum).